Reading from the N-terminus, the 427-residue chain is MSNNQILFERAQKTIPGGVNSPVRAFRSVGGTPRFVARAQGPYFWDADGKQYIDYIGSWGPMIVGHVHPEVLAAVQRVLADGFSFGAPTEAEIEIAEEICKLVPSIEQVRMVSSGTEATMSALRLARGFTGRSRIVKFEGCYHGHADSLLVKAGSGLLTFGNPTSAGVPADIAKHTTVLEYNNVAALEEAFGAFGDEIAAVIVEPVAGNMNLVRGTPEFLNALRALCTKHGAVLIFDEVMCGFRVALGGAQQHYGIAADLTCLGKVIGGGMPAAAFGGRRDIMAHLAPLGGVYQAGTLSGNPIAVAAGLKTLQLIQAPGFYDALTAQTKRLADGLAAEARAAGVPFAADSIGAMFGLYFAERVPASFAEVTKSDVERFNRFFHLMLDEGVYFAPSAYEAGFVSSTHDDAVIDATLAAARRAFAALAA.

Lysine 265 carries the post-translational modification N6-(pyridoxal phosphate)lysine.

This sequence belongs to the class-III pyridoxal-phosphate-dependent aminotransferase family. HemL subfamily. In terms of assembly, homodimer. Requires pyridoxal 5'-phosphate as cofactor.

The protein resides in the cytoplasm. It carries out the reaction (S)-4-amino-5-oxopentanoate = 5-aminolevulinate. It participates in porphyrin-containing compound metabolism; protoporphyrin-IX biosynthesis; 5-aminolevulinate from L-glutamyl-tRNA(Glu): step 2/2. In Burkholderia vietnamiensis (strain G4 / LMG 22486) (Burkholderia cepacia (strain R1808)), this protein is Glutamate-1-semialdehyde 2,1-aminomutase.